A 141-amino-acid chain; its full sequence is Large ribosomal subunit protein uL11 (141 aa).

The protein belongs to the universal ribosomal protein uL11 family. Part of the ribosomal stalk of the 50S ribosomal subunit. Interacts with L10 and the large rRNA to form the base of the stalk. L10 forms an elongated spine to which L12 dimers bind in a sequential fashion forming a multimeric L10(L12)X complex. In terms of processing, one or more lysine residues are methylated.

Forms part of the ribosomal stalk which helps the ribosome interact with GTP-bound translation factors. The chain is Large ribosomal subunit protein uL11 from Synechococcus sp. (strain CC9902).